The primary structure comprises 125 residues: Apolipoprotein C-IV (125 aa).

Positions 1-27 (MSLLRHSLQALPALCLCVLVLACIGAC) are cleaved as a signal peptide.

The protein belongs to the apolipoprotein C4 family.

The protein resides in the secreted. Its function is as follows. May participate in lipoprotein metabolism. The protein is Apolipoprotein C-IV (APOC4) of Ateles geoffroyi (Black-handed spider monkey).